A 372-amino-acid polypeptide reads, in one-letter code: 4-hydroxy-3-methylbut-2-en-1-yl diphosphate synthase (flavodoxin) (372 aa).

[4Fe-4S] cluster contacts are provided by cysteine 270, cysteine 273, cysteine 305, and glutamate 312.

This sequence belongs to the IspG family. Requires [4Fe-4S] cluster as cofactor.

It carries out the reaction (2E)-4-hydroxy-3-methylbut-2-enyl diphosphate + oxidized [flavodoxin] + H2O + 2 H(+) = 2-C-methyl-D-erythritol 2,4-cyclic diphosphate + reduced [flavodoxin]. It participates in isoprenoid biosynthesis; isopentenyl diphosphate biosynthesis via DXP pathway; isopentenyl diphosphate from 1-deoxy-D-xylulose 5-phosphate: step 5/6. In terms of biological role, converts 2C-methyl-D-erythritol 2,4-cyclodiphosphate (ME-2,4cPP) into 1-hydroxy-2-methyl-2-(E)-butenyl 4-diphosphate. This Shigella boydii serotype 18 (strain CDC 3083-94 / BS512) protein is 4-hydroxy-3-methylbut-2-en-1-yl diphosphate synthase (flavodoxin).